A 439-amino-acid chain; its full sequence is Enolase (439 aa).

Positions 157 and 166 each coordinate substrate. Glutamate 209 (proton donor) is an active-site residue. 3 residues coordinate Mg(2+): aspartate 244, glutamate 297, and aspartate 324. The substrate site is built by glutamate 297 and aspartate 324. Lysine 349 serves as the catalytic Proton acceptor. Residues 376-379 (SHRS) and lysine 400 contribute to the substrate site.

The protein belongs to the enolase family. As to quaternary structure, homodimer. It depends on Mg(2+) as a cofactor.

It localises to the cytoplasm. The catalysed reaction is (2R)-2-phosphoglycerate = phosphoenolpyruvate + H2O. The protein operates within carbohydrate degradation; glycolysis; pyruvate from D-glyceraldehyde 3-phosphate: step 4/5. This Mastigamoeba balamuthi (Phreatamoeba balamuthi) protein is Enolase (ENOL).